The following is a 915-amino-acid chain: Clathrin coat assembly protein AP180 (915 aa).

Positions 14 to 145 (QYSVTGSAVA…FSYRQMAFDF (132 aa)) constitute an ENTH domain. Disordered stretches follow at residues 285–326 (LEGK…DTSP), 391–425 (SVPSEAPISDPFAPEPSPPTTTTEPASASASATTA), and 497–522 (PETSAPVVTPTASTAPPVPATAPSPA). S296, S300, and S306 each carry phosphoserine. Polar residues predominate over residues 302–324 (LSKSSPATTVTSPNSTPAKTIDT). A glycan (O-linked (GlcNAc) threonine) is linked at T310. S313 carries the post-translational modification Phosphoserine. The residue at position 317 (T317) is a Phosphothreonine. Composition is skewed to low complexity over residues 410–425 (TTTTEPASASASATTA) and 500–511 (SAPVVTPTASTA). A compositionally biased stretch (pro residues) spans 512–522 (PPVPATAPSPA). Residues S594, S600, P627, S640, and S646 each carry the phosphoserine modification. Positions 720–735 (TTPSTSSSSSFDPSGD) are enriched in low complexity. Residues 720–765 (TTPSTSSSSSFDPSGDLLMPTMAPSGQPAPVSMVPPSPAMSASKGL) form a disordered region. S775 is subject to Phosphoserine. A disordered region spans residues 817–855 (SAGVPPQGTVPPTSSVPPGAGAPSVGQPGAGYGMPPAGT). An Asymmetric dimethylarginine; alternate modification is found at R873. R873 is subject to Omega-N-methylarginine; alternate. Positions 875–915 (PFGAAAVPGTQLSPSPTPATQSPKKPPAKDPLADLNIKDFL) are disordered. Over residues 884–896 (TQLSPSPTPATQS) the composition is skewed to polar residues. Positions 901–915 (PAKDPLADLNIKDFL) are enriched in basic and acidic residues.

The protein belongs to the PICALM/SNAP91 family. In terms of assembly, binds AP2A2. Interacts with AP2B1; clathrin competes with SNAP91. Post-translationally, thr-310 can be modified by the addition of N-acetylglucosamine which can be further phosphorylated. The form with phosphorylated O-linked N-acetylglucosamine is predominant in brain synaptosomes. There is no evidence for direct Thr-310 phosphorylation.

The protein localises to the cell membrane. It localises to the membrane. It is found in the coated pit. Adaptins are components of the adapter complexes which link clathrin to receptors in coated vesicles. Clathrin-associated protein complexes are believed to interact with the cytoplasmic tails of membrane proteins, leading to their selection and concentration. Binding of AP180 to clathrin triskelia induces their assembly into 60-70 nm coats. This Rattus norvegicus (Rat) protein is Clathrin coat assembly protein AP180 (Snap91).